The sequence spans 224 residues: RNA-free ribonuclease P (224 aa).

It belongs to the HARP family.

The catalysed reaction is Endonucleolytic cleavage of RNA, removing 5'-extranucleotides from tRNA precursor.. Functionally, RNA-free RNase P that catalyzes the removal of the 5'-leader sequence from pre-tRNA to produce the mature 5'-terminus. This chain is RNA-free ribonuclease P, found in Haloarcula marismortui (strain ATCC 43049 / DSM 3752 / JCM 8966 / VKM B-1809) (Halobacterium marismortui).